A 563-amino-acid polypeptide reads, in one-letter code: PHD finger protein EHD3 (563 aa).

The interval 1–46 (MGSQNRPPPPRKRQPPPPEDHLVTYKRRRSKETQPLPLMANGANSK) is disordered. 3 PHD-type zinc fingers span residues 296–348 (LCPC…CSFK), 420–472 (SNLC…CWYC), and 474–524 (SCLC…CKIR).

As to quaternary structure, interacts with TRX1. In terms of tissue distribution, expressed in shoot apical meristem and leaves.

It is found in the nucleus. In terms of biological role, probable transcription factor involved in the regulation of floral induction under long day (LD) conditions. Promotes photoperiodic flowering by repressing GHD7, a major floral repressor. Seems to function independently of HD1. This chain is PHD finger protein EHD3, found in Oryza sativa subsp. japonica (Rice).